Here is a 167-residue protein sequence, read N- to C-terminus: Ribosome maturation factor RimM (167 aa).

The region spanning 92–166 (DDEFYHTDLI…RIVADPPEGL (75 aa)) is the PRC barrel domain.

The protein belongs to the RimM family. In terms of assembly, binds ribosomal protein uS19.

Its subcellular location is the cytoplasm. An accessory protein needed during the final step in the assembly of 30S ribosomal subunit, possibly for assembly of the head region. Essential for efficient processing of 16S rRNA. May be needed both before and after RbfA during the maturation of 16S rRNA. It has affinity for free ribosomal 30S subunits but not for 70S ribosomes. This is Ribosome maturation factor RimM from Ruegeria pomeroyi (strain ATCC 700808 / DSM 15171 / DSS-3) (Silicibacter pomeroyi).